The primary structure comprises 711 residues: MLNFFAAAPKGFEYSLAQELTEFGATEIKESVAGVYFTAPLTLAYRITLWTRLASRIVLVIYKGPCESAEQLYNAAYCIDWSAHFSNRNTFSIDFHGTGGFINNTQFGALKIKDAIVDRFRDDGDARPNVARIDADIKVDAHFRNGVITIAMNFSGPSLHQRGYRSTTGEAPLKENLAANMLVRSGWKAAPTTLLDPFCGSGTVLIEAALMAADIAPGLQRNRFGFEHWRRHDKATWHEIVEEAKARASLGVKRCEVKFYGSDIDSRLVALAKRNAQNAGVLELIEFNVANALNVEPPAAEGYLITNPPYGERLGSVSELLQLYYQLGDKFKKEFGGWKVAMLCSDIELISALKLKADKQMKMFNGALECAFNLYTLHAQSTRRDTPVLPEGVDIADIAPAFANRIKKNAKQFEKWAQKEGIDSYRLYDADIPEYNVAVDKYLDYVVVQEYMAPASIPEAVTKRRLSDVLLALPAAIGVDPHKIIMKTRERQKGTNQYQKLDERKLELITTEYGAKFKLNLTGYLDTGLFLDHRLTRRLVGQKSKGRRVLNLFSYTGSASVHAALGGAKSVTTVDMSNTYLAWAKENFALNNLSGKQYEFVQADCLQWIRDCNEQYDLIFIDPPTFSNSKRMEDSFDVQRDHVNLLGMLIKLLSPNGELVFSNNKRKFKMDTETLTKMKIKVQNIDDMTLPLDYKRNPHIHNTWLITHADK.

Residues L43–F154 form the THUMP domain.

The protein belongs to the methyltransferase superfamily. RlmKL family.

The protein localises to the cytoplasm. It catalyses the reaction guanosine(2445) in 23S rRNA + S-adenosyl-L-methionine = N(2)-methylguanosine(2445) in 23S rRNA + S-adenosyl-L-homocysteine + H(+). The catalysed reaction is guanosine(2069) in 23S rRNA + S-adenosyl-L-methionine = N(2)-methylguanosine(2069) in 23S rRNA + S-adenosyl-L-homocysteine + H(+). Functionally, specifically methylates the guanine in position 2445 (m2G2445) and the guanine in position 2069 (m7G2069) of 23S rRNA. This is Ribosomal RNA large subunit methyltransferase K/L from Shewanella oneidensis (strain ATCC 700550 / JCM 31522 / CIP 106686 / LMG 19005 / NCIMB 14063 / MR-1).